A 300-amino-acid polypeptide reads, in one-letter code: Transcription termination/antitermination protein NusG (300 aa).

Residues methionine 1–isoleucine 99 form a disordered region. 2 stretches are compositionally biased toward acidic residues: residues glutamate 14–aspartate 41 and glutamate 47–aspartate 97.

This sequence belongs to the NusG family.

Participates in transcription elongation, termination and antitermination. In Streptomyces coelicolor (strain ATCC BAA-471 / A3(2) / M145), this protein is Transcription termination/antitermination protein NusG.